Consider the following 100-residue polypeptide: Large ribosomal subunit protein eL30 (100 aa).

The protein belongs to the eukaryotic ribosomal protein eL30 family.

In Methanococcus maripaludis (strain DSM 14266 / JCM 13030 / NBRC 101832 / S2 / LL), this protein is Large ribosomal subunit protein eL30.